Reading from the N-terminus, the 57-residue chain is Small ribosomal subunit protein bS21 (57 aa).

A disordered region spans residues Arg34–Arg57. Positions Val43–Arg57 are enriched in basic residues.

The protein belongs to the bacterial ribosomal protein bS21 family.

The sequence is that of Small ribosomal subunit protein bS21 from Aster yellows witches'-broom phytoplasma (strain AYWB).